The primary structure comprises 129 residues: Glycine cleavage system H protein (129 aa).

A Lipoyl-binding domain is found at 24 to 106 (SYTVGITEHA…YGDGWFFRIM (83 aa)). An N6-lipoyllysine modification is found at Lys-65.

This sequence belongs to the GcvH family. The glycine cleavage system is composed of four proteins: P, T, L and H. The cofactor is (R)-lipoate.

Functionally, the glycine cleavage system catalyzes the degradation of glycine. The H protein shuttles the methylamine group of glycine from the P protein to the T protein. The sequence is that of Glycine cleavage system H protein from Shewanella denitrificans (strain OS217 / ATCC BAA-1090 / DSM 15013).